The primary structure comprises 423 residues: Glucose-1-phosphate adenylyltransferase (423 aa).

Alpha-D-glucose 1-phosphate-binding positions include Tyr98, Gly163, 178-179 (EK), and Ser189.

This sequence belongs to the bacterial/plant glucose-1-phosphate adenylyltransferase family. As to quaternary structure, homotetramer.

The catalysed reaction is alpha-D-glucose 1-phosphate + ATP + H(+) = ADP-alpha-D-glucose + diphosphate. It participates in glycan biosynthesis; glycogen biosynthesis. In terms of biological role, involved in the biosynthesis of ADP-glucose, a building block required for the elongation reactions to produce glycogen. Catalyzes the reaction between ATP and alpha-D-glucose 1-phosphate (G1P) to produce pyrophosphate and ADP-Glc. The polypeptide is Glucose-1-phosphate adenylyltransferase (Thermotoga maritima (strain ATCC 43589 / DSM 3109 / JCM 10099 / NBRC 100826 / MSB8)).